A 283-amino-acid polypeptide reads, in one-letter code: ATP phosphoribosyltransferase (283 aa).

The protein belongs to the ATP phosphoribosyltransferase family. Long subfamily. It depends on Mg(2+) as a cofactor.

The protein resides in the cytoplasm. The catalysed reaction is 1-(5-phospho-beta-D-ribosyl)-ATP + diphosphate = 5-phospho-alpha-D-ribose 1-diphosphate + ATP. It participates in amino-acid biosynthesis; L-histidine biosynthesis; L-histidine from 5-phospho-alpha-D-ribose 1-diphosphate: step 1/9. Its activity is regulated as follows. Feedback inhibited by histidine. Functionally, catalyzes the condensation of ATP and 5-phosphoribose 1-diphosphate to form N'-(5'-phosphoribosyl)-ATP (PR-ATP). Has a crucial role in the pathway because the rate of histidine biosynthesis seems to be controlled primarily by regulation of HisG enzymatic activity. The sequence is that of ATP phosphoribosyltransferase from Parabacteroides distasonis (strain ATCC 8503 / DSM 20701 / CIP 104284 / JCM 5825 / NCTC 11152).